The following is a 692-amino-acid chain: Elongation factor G (692 aa).

The region spanning 8–283 (DKYRNIGIMA…AVVDYMPSPL (276 aa)) is the tr-type G domain. Residues 17–24 (AHIDAGKT), 81–85 (DTPGH), and 135–138 (NKMD) contribute to the GTP site.

The protein belongs to the TRAFAC class translation factor GTPase superfamily. Classic translation factor GTPase family. EF-G/EF-2 subfamily.

The protein localises to the cytoplasm. Catalyzes the GTP-dependent ribosomal translocation step during translation elongation. During this step, the ribosome changes from the pre-translocational (PRE) to the post-translocational (POST) state as the newly formed A-site-bound peptidyl-tRNA and P-site-bound deacylated tRNA move to the P and E sites, respectively. Catalyzes the coordinated movement of the two tRNA molecules, the mRNA and conformational changes in the ribosome. The polypeptide is Elongation factor G (Trichlorobacter lovleyi (strain ATCC BAA-1151 / DSM 17278 / SZ) (Geobacter lovleyi)).